We begin with the raw amino-acid sequence, 364 residues long: Melatonin receptor type 1B (364 aa).

Positions 1–28 are cleaved as a signal peptide; it reads MPDNSSIANCCAASGLAARPSWPGSAEA. Over 29 to 45 the chain is Extracellular; that stretch reads EPPETPRAPWVAPMLST. A helical membrane pass occupies residues 46-66; it reads VVIVTTAVDFVGNLLVILSVL. The Cytoplasmic segment spans residues 67 to 81; the sequence is RNRKLRNAGNLFVVN. Residues 82–102 traverse the membrane as a helical segment; sequence LALADLVVALYPYPLILVAIL. Residues 103 to 115 lie on the Extracellular side of the membrane; sequence HDGWVLGEIHCKA. Residues Cys113 and Cys190 are joined by a disulfide bond. Residues 116–136 form a helical membrane-spanning segment; it reads SAFVMGLSVIGSVFNITAIAI. Topologically, residues 137–158 are cytoplasmic; sequence NRYWCICHSATYHRACSQWHAP. The chain crosses the membrane as a helical span at residues 159–179; that stretch reads LYISLIWLLTLVALVPNFFVG. At 180–200 the chain is on the extracellular side; sequence SLEYDPRIYSCTFIQTASTQY. Residues 201 to 221 form a helical membrane-spanning segment; sequence TMAVVAIHFLLPIAVVSFCYL. Over 222–255 the chain is Cytoplasmic; that stretch reads RIWILVLQARRKAKAERKLRLRPSDLRSFLTMFA. The helical transmembrane segment at 256 to 276 threads the bilayer; it reads VFVVFAICWAPLNCIGLAVAI. Residues 277 to 287 are Extracellular-facing; that stretch reads NPEAMALQIPE. Residues 288 to 308 traverse the membrane as a helical segment; the sequence is GLFVTSYFLAYFNSCLNAIVY. At 309–364 the chain is on the cytoplasmic side; that stretch reads GLLNQNFRREYKRILSALWSTGRCFHDASKCHLTEDLQGPVPPAAMATIPVQEGAL.

It belongs to the G-protein coupled receptor 1 family. Expressed in the hippocampus, kidney, and ovary.

The protein resides in the cell membrane. Its function is as follows. High affinity receptor for melatonin. The activity of this receptor is mediated by pertussis toxin sensitive G proteins that inhibits adenylate cyclase activity. The protein is Melatonin receptor type 1B of Rattus norvegicus (Rat).